A 544-amino-acid polypeptide reads, in one-letter code: High affinity immunoglobulin alpha and immunoglobulin mu Fc receptor (544 aa).

A signal peptide spans 1 to 16; that stretch reads MPLFLILCLLQGSSFA. The Extracellular portion of the chain corresponds to 17–462; it reads LPQKRPHPRW…TFPEDESSSR (446 aa). One can recognise an Ig-like V-type domain in the interval 61-169; sequence PNALKGSRLV…NMLFLSMNLT (109 aa). Residues 75 to 97 form a mediates immunoglobulin Fc fragment-binding region; the sequence is GGAVTIQCHYAPSSVNRHQRKYW. An intrachain disulfide couples Cys-82 to Cys-153. N-linked (GlcNAc...) asparagine glycosylation is present at Asn-167. Residues 218–325 form a disordered region; that stretch reads DTVASTPGTS…TTKADRPRED (108 aa). Polar residues-rich tracts occupy residues 220–232 and 280–291; these read VASTPGTSMTTAS and ASKSRSMSNTTE. Over residues 307-325 the composition is skewed to basic and acidic residues; the sequence is ASKDRREITTTKADRPRED. A helical transmembrane segment spans residues 463–483; it reads TLAPVSTMLALFMLMALVLLQ. Residues 484-544 lie on the Cytoplasmic side of the membrane; that stretch reads RKLRRRRTSQ…LTAPERNPGP (61 aa). The segment at 511 to 544 is disordered; the sequence is PQPDQLPHVERKMLQDDSLPAGASLTAPERNPGP.

In terms of assembly, interacts with IGHM; this interaction facilitates the endocytosis of IgM-coated microbes or IgM-antigen immune complexes. In terms of processing, N-glycosylated.

Its subcellular location is the cell membrane. In terms of biological role, functions as a receptor for the Fc fragment of IgA and IgM. Binds IgA and IgM with high affinity and mediates their endocytosis. May function in the immune response to microbes mediated by IgA and IgM. This Pongo abelii (Sumatran orangutan) protein is High affinity immunoglobulin alpha and immunoglobulin mu Fc receptor (FCAMR).